The chain runs to 119 residues: Large ribosomal subunit protein bL20 (119 aa).

This sequence belongs to the bacterial ribosomal protein bL20 family.

Binds directly to 23S ribosomal RNA and is necessary for the in vitro assembly process of the 50S ribosomal subunit. It is not involved in the protein synthesizing functions of that subunit. This chain is Large ribosomal subunit protein bL20, found in Nitrosomonas eutropha (strain DSM 101675 / C91 / Nm57).